We begin with the raw amino-acid sequence, 317 residues long: Taste receptor type 2 member 14 (317 aa).

Residues 1–7 (MGGVIKS) are Extracellular-facing. A helical transmembrane segment spans residues 8-28 (IFTFVLIVEFIIGNLGNSFIA). Topologically, residues 29–55 (LVNCIDWVKGRKISSVDRILTALAISK) are cytoplasmic. A helical membrane pass occupies residues 56–76 (ISLVWLIFGSWCVSVFFPALF). Over 77-87 (ATEKMFRMLTN) the chain is Extracellular. Cholesterol contacts are provided by Thr-86 and Trp-89. The chain crosses the membrane as a helical span at residues 88–108 (IWTVINHFSVWLATGLGTFYF). Residues 109–129 (LKIANFSNSIFLYLKWRVKKV) are Cytoplasmic-facing. Residues 130 to 150 (VLVLLLVTSVFLFLNIALINI) traverse the membrane as a helical segment. At 151 to 184 (HINASINGYRRNKTCSSDSSNFTRFSSLIVLTST) the chain is on the extracellular side. 3 N-linked (GlcNAc...) asparagine glycosylation sites follow: Asn-153, Asn-162, and Asn-171. Val-180 serves as a coordination point for cholesterol. Residues 185 to 205 (VFIFIPFTLSLAMFLLLIFSM) traverse the membrane as a helical segment. Residues 206–232 (WKHRKKMQHTVKRSGDASTKAHRGVKS) are Cytoplasmic-facing. A helical membrane pass occupies residues 233–253 (MMTFFLLYAIFSLSFFISVWT). Over 254–261 (SERLEENL) the chain is Extracellular. Residues 262–282 (IILSQVMGMAYPSCHSCVLIL) traverse the membrane as a helical segment. Residues Ser-265 and Met-268 each coordinate cholesterol. At 283-317 (GNKKLRQASLSVLLWLRYMFKDGEPSGHKEFRESS) the chain is on the cytoplasmic side.

Belongs to the G-protein coupled receptor T2R family. In terms of assembly, core component of the TAS2R14-GNAI1 complex, consisting of TAS2R14, GNAI1, GNB1 and GNG2; within the complex interacts with GNAI1. Core component of the TAS2R14-GNAT3 complex, consisting of TAS2R14, GNAT3, GNB1 and GNG2; within the complex interacts with GNAT3. Core component of the TAS2R14-GNAS2 complex, consisting of TAS2R14, GNAS2, GNB1 and GNG2; within the complex interacts with GNAS2.

The protein localises to the membrane. The enzyme catalyses Ca(2+)(in) = Ca(2+)(out). It carries out the reaction 3',5'-cyclic AMP(in) = 3',5'-cyclic AMP(out). With respect to regulation, basal activity is enhanced by binding to bitter tastants, such as flufenamic acid and aristolochic acid. Regulated by cholesterol in a concentration-dependent manner. Gustducin-linked G-protein coupled receptor that plays a role in the perception of bitterness. The activity of this receptor stimulates GNAT3, activating the gustducin G-protein pathway. Likely plays a role in sensing the chemical composition of the gastrointestinal content and other extra-oral tissues via the inhibitory G-protein pathways. The chain is Taste receptor type 2 member 14 (TAS2R14) from Pan paniscus (Pygmy chimpanzee).